The chain runs to 207 residues: Mediator of RNA polymerase II transcription subunit 21 (207 aa).

The interval 37–121 (PHPDVPDAAP…PDSPRTFASR (85 aa)) is disordered. Residues 65 to 80 (PVPAQSQASPPAQNPA) show a composition bias toward low complexity. Residues 84 to 96 (AGAGTSVGEGGQT) show a composition bias toward gly residues. Low complexity predominate over residues 97 to 108 (PGPAAGAGADPN). Positions 146–196 (IDSSEAEQEKRIRELEGELRRVEEERELKMRELKRLRRTLENVLRAVETGL) form a coiled coil.

The protein belongs to the Mediator complex subunit 21 family. Component of the Mediator complex.

The protein resides in the nucleus. Component of the Mediator complex, a coactivator involved in the regulated transcription of nearly all RNA polymerase II-dependent genes. Mediator functions as a bridge to convey information from gene-specific regulatory proteins to the basal RNA polymerase II transcription machinery. Mediator is recruited to promoters by direct interactions with regulatory proteins and serves as a scaffold for the assembly of a functional preinitiation complex with RNA polymerase II and the general transcription factors. The polypeptide is Mediator of RNA polymerase II transcription subunit 21 (srb7) (Neosartorya fischeri (strain ATCC 1020 / DSM 3700 / CBS 544.65 / FGSC A1164 / JCM 1740 / NRRL 181 / WB 181) (Aspergillus fischerianus)).